We begin with the raw amino-acid sequence, 387 residues long: uncharacterized protein (387 aa).

The protein resides in the mitochondrion. This is an uncharacterized protein from Paramecium tetraurelia.